Consider the following 216-residue polypeptide: MSSRIGGKSKRSGELLAQKLQSEGISNPAVLKAIAHSPRHIFVPEILAHKAYDNTALPIGQGQTISQPYIVAKMSELLLADGRPQNILEIGTGSGYQTAILAQLTDKVFSVERIKALQWQAKRCLRAMDLHNVAMKHGDGWQGWRSKGPFDAIIVTAAPSSVPPALLDQLADGGRLVIPVGEQTQILKIITREGDVYNEQQVEAVRFVPLVPGDLL.

Serine 66 is an active-site residue.

The protein belongs to the methyltransferase superfamily. L-isoaspartyl/D-aspartyl protein methyltransferase family.

Its subcellular location is the cytoplasm. The enzyme catalyses [protein]-L-isoaspartate + S-adenosyl-L-methionine = [protein]-L-isoaspartate alpha-methyl ester + S-adenosyl-L-homocysteine. Its function is as follows. Catalyzes the methyl esterification of L-isoaspartyl residues in peptides and proteins that result from spontaneous decomposition of normal L-aspartyl and L-asparaginyl residues. It plays a role in the repair and/or degradation of damaged proteins. In Colwellia psychrerythraea (strain 34H / ATCC BAA-681) (Vibrio psychroerythus), this protein is Protein-L-isoaspartate O-methyltransferase.